The following is a 279-amino-acid chain: Movement protein (279 aa).

The disordered stretch occupies residues 246–279 (SESEELNVESPPAAIGSSSASRSEAFRPQVVNGL). Over residues 254–268 (ESPPAAIGSSSASRS) the composition is skewed to low complexity.

Belongs to the cucumovirus movement protein family.

Its subcellular location is the host cell junction. The protein resides in the host plasmodesma. Transports viral genome to neighboring plant cells directly through plasmosdesmata, without any budding. The movement protein allows efficient cell to cell propagation, by bypassing the host cell wall barrier. Acts by forming a tubular structure at the host plasmodesmata, enlarging it enough to allow free passage of virion capsids. This is Movement protein from Cucumis sativus (Cucumber).